Here is a 321-residue protein sequence, read N- to C-terminus: Fibronectin type III domain-containing protein 8 (321 aa).

Positions 175–277 (VPEVPFICEH…KPYKFATVST (103 aa)) constitute a Fibronectin type-III domain.

In Mus musculus (Mouse), this protein is Fibronectin type III domain-containing protein 8 (Fndc8).